We begin with the raw amino-acid sequence, 162 residues long: Regulatory protein RecX (162 aa).

The protein belongs to the RecX family.

The protein resides in the cytoplasm. Its function is as follows. Modulates RecA activity. In Xanthomonas campestris pv. campestris (strain 8004), this protein is Regulatory protein RecX.